Consider the following 964-residue polypeptide: Glycine dehydrogenase (decarboxylating) (964 aa).

K711 is subject to N6-(pyridoxal phosphate)lysine.

It belongs to the GcvP family. As to quaternary structure, the glycine cleavage system is composed of four proteins: P, T, L and H. It depends on pyridoxal 5'-phosphate as a cofactor.

The catalysed reaction is N(6)-[(R)-lipoyl]-L-lysyl-[glycine-cleavage complex H protein] + glycine + H(+) = N(6)-[(R)-S(8)-aminomethyldihydrolipoyl]-L-lysyl-[glycine-cleavage complex H protein] + CO2. The glycine cleavage system catalyzes the degradation of glycine. The P protein binds the alpha-amino group of glycine through its pyridoxal phosphate cofactor; CO(2) is released and the remaining methylamine moiety is then transferred to the lipoamide cofactor of the H protein. This Prochlorococcus marinus (strain SARG / CCMP1375 / SS120) protein is Glycine dehydrogenase (decarboxylating).